We begin with the raw amino-acid sequence, 328 residues long: Malate dehydrogenase (328 aa).

An NAD(+)-binding site is contributed by 11 to 17 (GAAGQIG). Residues Arg-92 and Arg-98 each contribute to the substrate site. Residues Asn-105, Gln-112, and 129 to 131 (VGN) contribute to the NAD(+) site. 2 residues coordinate substrate: Asn-131 and Arg-162. Catalysis depends on His-187, which acts as the Proton acceptor.

Belongs to the LDH/MDH superfamily. MDH type 2 family.

The enzyme catalyses (S)-malate + NAD(+) = oxaloacetate + NADH + H(+). In terms of biological role, catalyzes the reversible oxidation of malate to oxaloacetate. In Coxiella burnetii (strain RSA 493 / Nine Mile phase I), this protein is Malate dehydrogenase.